Here is a 359-residue protein sequence, read N- to C-terminus: Phospho-N-acetylmuramoyl-pentapeptide-transferase (359 aa).

Helical transmembrane passes span 3–23 (LILI…PALI), 55–75 (VAIL…GMAM), 80–100 (PSAS…VGFI), 117–137 (TAKT…ALQF), 156–176 (IATV…VVSA), 187–207 (LDGL…LITF), 231–251 (LALV…WNAA), 255–275 (IFMG…ISVT), 280–300 (ILAV…VVQI), and 334–354 (FWLL…GEWL).

Belongs to the glycosyltransferase 4 family. MraY subfamily. Mg(2+) is required as a cofactor.

The protein resides in the cell membrane. The catalysed reaction is UDP-N-acetyl-alpha-D-muramoyl-L-alanyl-gamma-D-glutamyl-meso-2,6-diaminopimeloyl-D-alanyl-D-alanine + di-trans,octa-cis-undecaprenyl phosphate = di-trans,octa-cis-undecaprenyl diphospho-N-acetyl-alpha-D-muramoyl-L-alanyl-D-glutamyl-meso-2,6-diaminopimeloyl-D-alanyl-D-alanine + UMP. It participates in cell wall biogenesis; peptidoglycan biosynthesis. Catalyzes the initial step of the lipid cycle reactions in the biosynthesis of the cell wall peptidoglycan: transfers peptidoglycan precursor phospho-MurNAc-pentapeptide from UDP-MurNAc-pentapeptide onto the lipid carrier undecaprenyl phosphate, yielding undecaprenyl-pyrophosphoryl-MurNAc-pentapeptide, known as lipid I. This is Phospho-N-acetylmuramoyl-pentapeptide-transferase from Mycolicibacterium smegmatis (strain ATCC 700084 / mc(2)155) (Mycobacterium smegmatis).